We begin with the raw amino-acid sequence, 563 residues long: MITSPSASRNSDTDLVWESSSSSSRNNSSAVASKPFLHSVPPSDPLRQANRLPIKILKMLTARTGHILHPEYLQPLPSTPVSPIELDAKKSPLALLAQTCSQIGKPDPPPSSKLSSVTSNGSSEKESKSGPLKLSDIGVEDKSSFKPYSKPADKKDSSSGVSSGEKSGFRVPSATCQPFTPRTGSPNSSTSASPMPSDGKGERDEKKDSDCNKNCSSDGSAPTSVSHSRISVSCAGINVEVNQHQETTSGSKASATSDSVSCVTSSSSASVLGSGLVAPVSPYKPGQTVFPLPPAGMTYPGSLAGAYAGYPQHFLPHGGSLVNAQLASSLGCSKAGSSPLAGASPPSIMSASLCRDPYCLSYHCASHLAGAAGASCTHDSAAAAAASALKSGYPLMYPTHPLHGVHSSPPSFGGHPLYPYGFMLPNDPLPHVCNWVSANGPCDKRFSSSEELLNHLRTHTAFTGTEKLISGYPSSSSLASAAAAAMACHMHMPPSGAPGSPGTLALRSPHHALGLSSRYHPYSKSPLPTPGAPVPVPAATGPYYSPYALYGQRLTTASALGYQ.

Polar residues predominate over residues 1-10 (MITSPSASRN). Disordered regions lie at residues 1–48 (MITS…PLRQ) and 101–226 (SQIG…TSVS). 2 stretches are compositionally biased toward low complexity: residues 19–33 (SSSSSSRNNSSAVAS) and 112–122 (SKLSSVTSNGS). Positions 174–194 (ATCQPFTPRTGSPNSSTSASP) are enriched in polar residues. The segment covering 199-211 (GKGERDEKKDSDC) has biased composition (basic and acidic residues). A compositionally biased stretch (polar residues) spans 212-226 (NKNCSSDGSAPTSVS). The C2H2-type zinc finger occupies 431–459 (HVCNWVSANGPCDKRFSSSEELLNHLRTH).

The protein belongs to the Elbow/Noc family. Interacts with nlz1.

The protein localises to the nucleus. Required for segmental gene expression during hindbrain development. May function as a transcriptional repressor. In Danio rerio (Zebrafish), this protein is Zinc finger protein 503 (znf503).